A 159-amino-acid polypeptide reads, in one-letter code: GDP-mannose mannosyl hydrolase (159 aa).

Residues 2–3 (FL), F8, and R36 each bind substrate. Residues 13 to 153 (RSTPLVSLDF…SRAYFLAEKR (141 aa)) enclose the Nudix hydrolase domain. Residues G49, E69, and Q122 each contribute to the Mg(2+) site. The short motif at 50 to 71 (GRVQKDETLEAAFERLTMAELG) is the Nudix box element.

It belongs to the Nudix hydrolase family. In terms of assembly, homodimer. It depends on Mg(2+) as a cofactor.

The catalysed reaction is GDP-alpha-D-mannose + H2O = D-mannose + GDP + H(+). In terms of biological role, hydrolyzes GDP-mannose. In Escherichia coli O157:H7, this protein is GDP-mannose mannosyl hydrolase.